Consider the following 318-residue polypeptide: Acetylglutamate kinase (318 aa).

Substrate contacts are provided by residues 80 to 81 (GG), Arg102, and Asn203.

Belongs to the acetylglutamate kinase family. ArgB subfamily.

The protein resides in the cytoplasm. The enzyme catalyses N-acetyl-L-glutamate + ATP = N-acetyl-L-glutamyl 5-phosphate + ADP. The protein operates within amino-acid biosynthesis; L-arginine biosynthesis; N(2)-acetyl-L-ornithine from L-glutamate: step 2/4. Functionally, catalyzes the ATP-dependent phosphorylation of N-acetyl-L-glutamate. This Bifidobacterium adolescentis (strain ATCC 15703 / DSM 20083 / NCTC 11814 / E194a) protein is Acetylglutamate kinase.